Here is a 78-residue protein sequence, read N- to C-terminus: Large ribosomal subunit protein bL28 (78 aa).

Belongs to the bacterial ribosomal protein bL28 family.

This Salmonella choleraesuis (strain SC-B67) protein is Large ribosomal subunit protein bL28.